A 138-amino-acid polypeptide reads, in one-letter code: MQHTFALIKPDAVQRNLIGAIINMIEKNDFYISAMKMLQMNRQQAEGFYSVHRERPFFNELVDYMISGPIVSLILTGENAVTRYRELMGATNPQNAQEGTIRKSFAISLMENAVHGSDSDENAIIEINYFFNAFERIR.

Residues Lys-9, Phe-57, Arg-85, Thr-91, Arg-102, and Asn-112 each contribute to the ATP site. The active-site Pros-phosphohistidine intermediate is the His-115.

The protein belongs to the NDK family. Homotetramer. It depends on Mg(2+) as a cofactor.

The protein localises to the cytoplasm. It carries out the reaction a 2'-deoxyribonucleoside 5'-diphosphate + ATP = a 2'-deoxyribonucleoside 5'-triphosphate + ADP. The catalysed reaction is a ribonucleoside 5'-diphosphate + ATP = a ribonucleoside 5'-triphosphate + ADP. Its function is as follows. Major role in the synthesis of nucleoside triphosphates other than ATP. The ATP gamma phosphate is transferred to the NDP beta phosphate via a ping-pong mechanism, using a phosphorylated active-site intermediate. This chain is Nucleoside diphosphate kinase, found in Lawsonia intracellularis (strain PHE/MN1-00).